The chain runs to 218 residues: Small ribosomal subunit protein uS3 (218 aa).

Residues 38–106 form the KH type-2 domain; that stretch reads LRNDLKKKLM…PVHLNIEEVK (69 aa).

Belongs to the universal ribosomal protein uS3 family. In terms of assembly, part of the 30S ribosomal subunit. Forms a tight complex with proteins S10 and S14.

Functionally, binds the lower part of the 30S subunit head. Binds mRNA in the 70S ribosome, positioning it for translation. This chain is Small ribosomal subunit protein uS3, found in Legionella pneumophila (strain Paris).